The primary structure comprises 288 residues: Bis(5'-nucleosyl)-tetraphosphatase, symmetrical (288 aa).

The protein belongs to the Ap4A hydrolase family.

It catalyses the reaction P(1),P(4)-bis(5'-adenosyl) tetraphosphate + H2O = 2 ADP + 2 H(+). In terms of biological role, hydrolyzes diadenosine 5',5'''-P1,P4-tetraphosphate to yield ADP. The chain is Bis(5'-nucleosyl)-tetraphosphatase, symmetrical from Pseudomonas putida (strain W619).